The sequence spans 195 residues: Endoribonuclease YbeY (195 aa).

Positions 152, 156, and 162 each coordinate Zn(2+).

This sequence belongs to the endoribonuclease YbeY family. It depends on Zn(2+) as a cofactor.

Its subcellular location is the cytoplasm. In terms of biological role, single strand-specific metallo-endoribonuclease involved in late-stage 70S ribosome quality control and in maturation of the 3' terminus of the 16S rRNA. The protein is Endoribonuclease YbeY of Rhodopseudomonas palustris (strain HaA2).